The chain runs to 432 residues: Pentatricopeptide repeat-containing protein 2, mitochondrial (432 aa).

Residues methionine 1–serine 33 constitute a mitochondrion transit peptide. 4 PPR repeats span residues lysine 108–proline 142, serine 143–serine 179, asparagine 360–proline 394, and threonine 395–valine 429.

The protein localises to the mitochondrion. In terms of biological role, mitochondrial RNA-binding protein that acts as a general translation factor. Plays a critical role in the synthesis of all mitochondrial DNA-encoded oxidative phosphorylation subunits, which are essential for mitochondrial respiration. Essential for the expression of iron-sulfur cluster (ISC) proteins as well as other heme proteins related to iron-sensing, and thus plays a key role in iron homeostasis. This Schizosaccharomyces pombe (strain 972 / ATCC 24843) (Fission yeast) protein is Pentatricopeptide repeat-containing protein 2, mitochondrial.